The following is a 660-amino-acid chain: Acyl-coenzyme A oxidase acox-1.3 (660 aa).

FAD-binding positions include 146-149, 154-155, and Gly-188; these read YAQT and GT. Substrate is bound by residues 282–285 and Arg-292; that span reads KIGY. FAD-binding positions include Arg-317 and 337–340; that span reads QQHR. 4 residues coordinate ATP: His-339, Ser-389, His-393, and Gln-401. Position 430–431 (430–431) interacts with substrate; it reads YE. Catalysis depends on Glu-431, which acts as the Proton acceptor. Glu-433 contributes to the FAD binding site. ATP-binding positions include 524–527 and Tyr-572; that span reads RASR. The Microbody targeting signal signature appears at 658–660; sequence AKL.

Belongs to the acyl-CoA oxidase family. In terms of assembly, forms a heterodimer with acox-1.1; the interaction may be important for the stability of acox-1.3. The cofactor is FAD.

It is found in the peroxisome. The enzyme catalyses asc-C7-CoA + O2 = asc-DeltaC7-CoA + H2O2. Its pathway is lipid metabolism; peroxisomal fatty acid beta-oxidation. With respect to regulation, activated by ATP. ATP binding leads to a conformational change that promotes FAD cofactor binding and enzyme activity. ATP binding likely occurs during acox-1.3 folding and/or dimer formation. Functionally, involved in the first step of peroxisomal beta-oxidation by catalyzing the desaturation of fatty acid-derived side chains of ascaroside pheromones, which regulates development and behavior. Specifically, shortens ascarosides with a 7-carbon side chain (asc-C7). Does not catalyze the desaturation of fatty acids or hydroxylated fatty acids. Involved in the biosynthesis of asc-C6-MK (daumone 2) and asc-delta-C9 (daumone 3) but not asc-C7 (daumone 1); daumones are pheromones produced during unfavourable growth conditions which promote entry into the dauer stage. The protein is Acyl-coenzyme A oxidase acox-1.3 of Caenorhabditis elegans.